We begin with the raw amino-acid sequence, 427 residues long: Kallistatin (427 aa).

Residues Met-1–Gly-20 form the signal peptide. N-linked (GlcNAc...) asparagine glycans are attached at residues Asn-33, Asn-108, Asn-157, and Asn-238.

Belongs to the serpin family. In terms of assembly, monomer and some homodimers.

It localises to the secreted. In terms of biological role, inhibits human amidolytic and kininogenase activities of tissue kallikrein. This is Kallistatin (SERPINA4) from Pongo abelii (Sumatran orangutan).